Here is a 260-residue protein sequence, read N- to C-terminus: Ribonuclease HII (260 aa).

Positions 73–260 (LHIAGIDEAG…APVQQQLDIV (188 aa)) constitute an RNase H type-2 domain. Asp79, Glu80, and Asp171 together coordinate a divalent metal cation.

This sequence belongs to the RNase HII family. Mn(2+) serves as cofactor. Mg(2+) is required as a cofactor.

It localises to the cytoplasm. The enzyme catalyses Endonucleolytic cleavage to 5'-phosphomonoester.. Its function is as follows. Endonuclease that specifically degrades the RNA of RNA-DNA hybrids. The protein is Ribonuclease HII of Desulfitobacterium hafniense (strain DSM 10664 / DCB-2).